The primary structure comprises 174 residues: UPF0398 protein LACR_0544 (174 aa).

This sequence belongs to the UPF0398 family.

The sequence is that of UPF0398 protein LACR_0544 from Lactococcus lactis subsp. cremoris (strain SK11).